Consider the following 525-residue polypeptide: Mitochondrial-processing peptidase subunit alpha (525 aa).

Residues 1 to 33 (MAAVVLAATRLLRGSGSWGCSRLRFGPPAYRRF) constitute a mitochondrion transit peptide. Lys-64 bears the N6-succinyllysine mark. An N6-acetyllysine modification is found at Lys-299.

The protein belongs to the peptidase M16 family. In terms of assembly, heterodimer of PMPCA (alpha) and PMPCB (beta) subunits, forming the mitochondrial processing protease (MPP) in which PMPCA is involved in substrate recognition and binding and PMPCB is the catalytic subunit. Ubiquitously expressed with highest expression in fetal tissues and adult brain, cerebellum and cerebellar vermis.

It is found in the mitochondrion matrix. The protein localises to the mitochondrion inner membrane. In terms of biological role, substrate recognition and binding subunit of the essential mitochondrial processing protease (MPP), which cleaves the mitochondrial sequence off newly imported precursors proteins. The chain is Mitochondrial-processing peptidase subunit alpha (PMPCA) from Homo sapiens (Human).